The sequence spans 81 residues: Protein RALF-like 6 (81 aa).

A signal peptide spans 1–29 (MAAHKKSHIRIFFVSVMIILSLFSGFGEG). Cystine bridges form between Cys46/Cys54 and Cys66/Cys72.

Belongs to the plant rapid alkalinization factor (RALF) family.

Its subcellular location is the secreted. In terms of biological role, cell signaling peptide that may regulate plant stress, growth, and development. Mediates a rapid alkalinization of extracellular space by mediating a transient increase in the cytoplasmic Ca(2+) concentration leading to a calcium-dependent signaling events through a cell surface receptor and a concomitant activation of some intracellular mitogen-activated protein kinases. This is Protein RALF-like 6 (RALFL6) from Arabidopsis thaliana (Mouse-ear cress).